Reading from the N-terminus, the 504-residue chain is Plasma protease C1 inhibitor (504 aa).

The N-terminal stretch at 1-22 (MASKLTPLTLLLLLLAGDRAFS) is a signal peptide. Positions 23 to 75 (DSEVTSHSSQDPLVVQEGSRDSVPERDGSRSPIEHTGQSSTWPTTSGSTKISN) are disordered. Positions 24-33 (SEVTSHSSQD) are enriched in polar residues. The span at 40 to 55 (GSRDSVPERDGSRSPI) shows a compositional bias: basic and acidic residues. A compositionally biased stretch (polar residues) spans 58–75 (TGQSSTWPTTSGSTKISN). N-linked (GlcNAc...) asparagine glycosylation is found at asparagine 75, asparagine 83, asparagine 107, asparagine 243, and asparagine 356. The tract at residues 94 to 132 (AQLPEDSPSQSPVNSSSPPSTASAPPTQAPTEPLCPEPL) is disordered. Residues 100-125 (SPSQSPVNSSSPPSTASAPPTQAPTE) are compositionally biased toward low complexity.

This sequence belongs to the serpin family. In terms of assembly, interacts with MASP1.

It localises to the secreted. Serine protease inhibitor, which acrs as a regulator of the classical complement pathway. Forms a proteolytically inactive stoichiometric complex with the C1r or C1s proteases. May also regulate blood coagulation, fibrinolysis and the generation of kinins. Very efficient inhibitor of FXIIa. Inhibits chymotrypsin and kallikrein. The polypeptide is Plasma protease C1 inhibitor (Serping1) (Rattus norvegicus (Rat)).